The sequence spans 377 residues: 5-hydroxytryptamine receptor 1D (377 aa).

The disordered stretch occupies residues 1-23 (MSPLNQSAEGLPQEASNRSLNAT). Topologically, residues 1 to 38 (MSPLNQSAEGLPQEASNRSLNATETSEAWDPRTLQALK) are extracellular. N-linked (GlcNAc...) asparagine glycans are attached at residues N5, N17, and N21. A helical membrane pass occupies residues 39–64 (ISLAVVLSVITLATVLSNAFVLTTIL). Topologically, residues 65-75 (LTRKLHTPANY) are cytoplasmic. The chain crosses the membrane as a helical span at residues 76 to 97 (LIGSLATTDLLVSILVMPISIA). Residues 98–109 (YTITHTWNFGQI) are Extracellular-facing. The chain crosses the membrane as a helical span at residues 110 to 134 (LCDIWLSSDITCCTASILHLCVIAL). C111 and C188 are joined by a disulfide. Residues D118 and C122 each contribute to the serotonin site. A DRY motif; important for ligand-induced conformation changes motif is present at residues 135 to 137 (DRY). At 135-154 (DRYWAITDALEYSKRRTAGH) the chain is on the cytoplasmic side. Residues 155 to 176 (AATMIAIVWAISICISIPPLFW) traverse the membrane as a helical segment. The Extracellular portion of the chain corresponds to 177–194 (RQAKAQEEMSDCLVNTSQ). The chain crosses the membrane as a helical span at residues 195-218 (ISYTIYSTCGAFYIPSVLLIILYG). Residues 219–300 (RIYRAARNRI…ISAARERKAT (82 aa)) lie on the Cytoplasmic side of the membrane. A helical transmembrane segment spans residues 301 to 326 (KILGIILGAFIICWLPFFVVSLVLPI). Residue S321 coordinates serotonin. Topologically, residues 327-335 (CRDSCWIHP) are extracellular. A helical transmembrane segment spans residues 336–359 (ALFDFFTWLGYLNSLINPIIYTVF). The NPxxY motif; important for ligand-induced conformation changes and signaling motif lies at 352 to 356 (NPIIY). The Cytoplasmic portion of the chain corresponds to 360-377 (NEEFRQAFQKIVPFRKAS).

Belongs to the G-protein coupled receptor 1 family. In terms of assembly, homodimer. Heterodimer with HTR1B. Detected in brain neocortex and caudate nucleus (at protein level).

The protein resides in the cell membrane. G-protein coupled receptor for 5-hydroxytryptamine (serotonin). Also functions as a receptor for ergot alkaloid derivatives, various anxiolytic and antidepressant drugs and other psychoactive substances. Ligand binding causes a conformation change that triggers signaling via guanine nucleotide-binding proteins (G proteins) and modulates the activity of downstream effectors, such as adenylate cyclase. HTR1D is coupled to G(i)/G(o) G alpha proteins and mediates inhibitory neurotransmission by inhibiting adenylate cyclase activity. Regulates the release of 5-hydroxytryptamine in the brain, and thereby affects neural activity. May also play a role in regulating the release of other neurotransmitters. May play a role in vasoconstriction. This Homo sapiens (Human) protein is 5-hydroxytryptamine receptor 1D.